The sequence spans 321 residues: Glucokinase (321 aa).

8-13 is a binding site for ATP; that stretch reads GDVGGT.

The protein belongs to the bacterial glucokinase family.

Its subcellular location is the cytoplasm. It catalyses the reaction D-glucose + ATP = D-glucose 6-phosphate + ADP + H(+). This chain is Glucokinase, found in Shigella dysenteriae serotype 1 (strain Sd197).